The sequence spans 124 residues: Large ribosomal subunit protein bL12 (124 aa).

The protein belongs to the bacterial ribosomal protein bL12 family. As to quaternary structure, homodimer. Part of the ribosomal stalk of the 50S ribosomal subunit. Forms a multimeric L10(L12)X complex, where L10 forms an elongated spine to which 2 to 4 L12 dimers bind in a sequential fashion. Binds GTP-bound translation factors.

Its function is as follows. Forms part of the ribosomal stalk which helps the ribosome interact with GTP-bound translation factors. Is thus essential for accurate translation. The protein is Large ribosomal subunit protein bL12 of Brucella abortus (strain S19).